A 281-amino-acid chain; its full sequence is CCAAT/enhancer-binding protein epsilon (281 aa).

Positions 1–30 (MSHGTYYECEPRGGQQPLEFSGGRAGPGEL) are disordered. Residue K121 forms a Glycyl lysine isopeptide (Lys-Gly) (interchain with G-Cter in SUMO2) linkage. The residue at position 181 (S181) is a Phosphoserine. A bZIP domain is found at 204-267 (SLEYRLRRER…DTLRNLFRQI (64 aa)). The interval 208-245 (RLRRERNNIAVRKSRDKAKRRIMETQQKVLEYMAENER) is basic motif. A leucine-zipper region spans residues 246–267 (LRSRVDQLTQELDTLRNLFRQI).

Belongs to the bZIP family. C/EBP subfamily. As to quaternary structure, binds DNA as a homodimer and as a heterodimer. Can form stable heterodimers with CEBPA, CEBPB and CEBPD. Interacts with GATA1 and SPI1. Interacts with SMARCD2.

The protein resides in the nucleus. Transcriptional activator. C/EBP are DNA-binding proteins that recognize two different motifs: the CCAAT homology common to many promoters and the enhanced core homology common to many enhancers. Required for the promyelocyte-myelocyte transition in myeloid differentiation. The sequence is that of CCAAT/enhancer-binding protein epsilon (Cebpe) from Rattus norvegicus (Rat).